The primary structure comprises 283 residues: (+)-O-methylkolavelool synthase (283 aa).

Residues Gln106, 129–130 (NA), and His151 contribute to the S-adenosyl-L-methionine site.

This sequence belongs to the methyltransferase superfamily.

The catalysed reaction is (+)-kolavelool + S-adenosyl-L-methionine = (+)-O-methylkolavelool + S-adenosyl-L-homocysteine + H(+). Functionally, involved in the biosynthesis of the diterpene (+)-O-methylkolavelool. Catalyzes the transfer of a methyl group from S-adenosyl-L-methionine to the hydroxy group of (+)-kolavelool, forming (+)-O-methylkolavelool. This Herpetosiphon aurantiacus (strain ATCC 23779 / DSM 785 / 114-95) protein is (+)-O-methylkolavelool synthase.